Reading from the N-terminus, the 160-residue chain is Ureidoglycolate lyase (160 aa).

This sequence belongs to the ureidoglycolate lyase family. Homodimer. Ni(2+) is required as a cofactor.

It carries out the reaction (S)-ureidoglycolate = urea + glyoxylate. The protein operates within nitrogen metabolism; (S)-allantoin degradation. Functionally, catalyzes the catabolism of the allantoin degradation intermediate (S)-ureidoglycolate, generating urea and glyoxylate. Involved in the utilization of allantoin as nitrogen source. The chain is Ureidoglycolate lyase from Salmonella agona (strain SL483).